A 242-amino-acid chain; its full sequence is ATP-dependent dethiobiotin synthetase BioD (242 aa).

S12–I17 is an ATP binding site. T16 contacts Mg(2+). K37 is an active-site residue. Residue D66 coordinates ATP. D66 and E124 together coordinate Mg(2+). N184 to R185 is an ATP binding site.

It belongs to the dethiobiotin synthetase family. Homodimer. The cofactor is Mg(2+).

The protein resides in the cytoplasm. It carries out the reaction (7R,8S)-7,8-diammoniononanoate + CO2 + ATP = (4R,5S)-dethiobiotin + ADP + phosphate + 3 H(+). Its pathway is cofactor biosynthesis; biotin biosynthesis; biotin from 7,8-diaminononanoate: step 1/2. In terms of biological role, catalyzes a mechanistically unusual reaction, the ATP-dependent insertion of CO2 between the N7 and N8 nitrogen atoms of 7,8-diaminopelargonic acid (DAPA, also called 7,8-diammoniononanoate) to form a ureido ring. The chain is ATP-dependent dethiobiotin synthetase BioD from Mannheimia succiniciproducens (strain KCTC 0769BP / MBEL55E).